The following is a 207-amino-acid chain: CASP-like protein F16 (207 aa).

The disordered stretch occupies residues 1–30 (MEKSEKGNGVAPATRSPMALMGSSRNENQE). At 1 to 37 (MEKSEKGNGVAPATRSPMALMGSSRNENQEVNTSMRT) the chain is on the cytoplasmic side. Residues 38-58 (AETMLRLVPMALGVAALVVML) traverse the membrane as a helical segment. Over 59 to 79 (KNSQSNDFGSVSYSDLGAFRY) the chain is Extracellular. A helical transmembrane segment spans residues 80–100 (LVHANGICAGYSLLSAIIAAV). Residues 101-108 (PSPSTMPR) are Cytoplasmic-facing. The chain crosses the membrane as a helical span at residues 109 to 129 (AWTFFLLDQILTYVILGAAAV). The Extracellular portion of the chain corresponds to 130–159 (STEVLYLANKGDSAITWSAACGTFAGFCHK). A helical transmembrane segment spans residues 160-180 (ATIAVVITFVAVICYAVLSLV). Residues 181 to 207 (SSYRLFTKFDAPVNYPSKTIEATVFHG) lie on the Cytoplasmic side of the membrane.

This sequence belongs to the Casparian strip membrane proteins (CASP) family. Homodimer and heterodimers.

The protein localises to the cell membrane. This Gossypium hirsutum (Upland cotton) protein is CASP-like protein F16 (F16).